The following is a 702-amino-acid chain: Elongation factor G (702 aa).

Residues glutamate 8–valine 290 form the tr-type G domain. Residues alanine 17 to threonine 24, aspartate 88 to histidine 92, and asparagine 142 to aspartate 145 each bind GTP.

The protein belongs to the TRAFAC class translation factor GTPase superfamily. Classic translation factor GTPase family. EF-G/EF-2 subfamily.

The protein resides in the cytoplasm. Catalyzes the GTP-dependent ribosomal translocation step during translation elongation. During this step, the ribosome changes from the pre-translocational (PRE) to the post-translocational (POST) state as the newly formed A-site-bound peptidyl-tRNA and P-site-bound deacylated tRNA move to the P and E sites, respectively. Catalyzes the coordinated movement of the two tRNA molecules, the mRNA and conformational changes in the ribosome. This is Elongation factor G from Acidovorax sp. (strain JS42).